The primary structure comprises 92 residues: Calitoxin (92 aa).

The signal sequence occupies residues Met-1–Ser-20. A propeptide spanning residues Arg-21–Ala-42 is cleaved from the precursor. Intrachain disulfides connect Cys-47-Cys-86, Cys-49-Cys-77, and Cys-67-Cys-87.

It belongs to the sea anemone sodium channel inhibitory toxin family. In terms of tissue distribution, expressed both outside and in acontia, a specialised envenomation structure laden with batteries of venom-containing nematocysts found only in the superfamily Metridioidea.

It is found in the secreted. It localises to the nematocyst. In neuromuscular preparation of crustaceans, the toxin increased neurotransmitter release, causing repetitive firing of the axons. May affect sodium channels (Nav). This is Calitoxin from Calliactis polypus (Hermit crab anemone).